We begin with the raw amino-acid sequence, 1384 residues long: RRP12-like protein (1384 aa).

A compositionally biased stretch (basic residues) spans 1–13; that stretch reads MGKFRSKLKRNGK. Residues 1–32 form a disordered region; sequence MGKFRSKLKRNGKGKTWSRGESATSNPTQMKH. Residues 19–29 are compositionally biased toward polar residues; that stretch reads RGESATSNPTQ. Residues serine 82, serine 85, serine 96, serine 1094, serine 1095, serine 1117, and serine 1119 each carry the phosphoserine modification. 3 disordered regions span residues 1082 to 1102, 1114 to 1155, and 1176 to 1384; these read LRKKQNLEAQEDSSDDELVSG, LADS…IRED, and SAQT…KKYK. 2 stretches are compositionally biased toward acidic residues: residues 1090-1099 and 1114-1127; these read AQEDSSDDEL and LADSDSDLPEDMDA. The segment covering 1176-1191 has biased composition (polar residues); it reads SAQTATPAQSQKTKAQ. Phosphoserine occurs at positions 1221, 1225, 1227, 1230, 1250, and 1251. Composition is skewed to polar residues over residues 1276 to 1285 and 1297 to 1315; these read SGKTTASSRY and TAGNSDAMSVKSGKSTSRP. The segment covering 1321–1334 has biased composition (basic and acidic residues); the sequence is GSKKAKGDMKKSGK. The span at 1348 to 1362 shows a compositional bias: basic residues; sequence LNKRKRSMNSRKFKS. Gly residues predominate over residues 1369–1378; it reads AENGGAGGGR.

This sequence belongs to the RRP12 family.

The protein resides in the nucleus. This chain is RRP12-like protein, found in Drosophila melanogaster (Fruit fly).